The primary structure comprises 270 residues: Small ribosomal subunit protein bS1m (270 aa).

The interval 218-250 is disordered; sequence TKQGFKHLGPKPLAYTEKKRETTKQSTKNNVFQ.

It belongs to the bacterial ribosomal protein bS1 family.

It is found in the mitochondrion. The sequence is that of Small ribosomal subunit protein bS1m (RPS1) from Marchantia polymorpha (Common liverwort).